Here is a 131-residue protein sequence, read N- to C-terminus: Small ribosomal subunit protein bS6 (131 aa).

A disordered region spans residues 100–131 (SPMVKAKDERRSRDYSLEDANMDAEEAGDSEE). The segment covering 104 to 115 (KAKDERRSRDYS) has biased composition (basic and acidic residues). Acidic residues predominate over residues 119–131 (ANMDAEEAGDSEE).

This sequence belongs to the bacterial ribosomal protein bS6 family.

In terms of biological role, binds together with bS18 to 16S ribosomal RNA. The protein is Small ribosomal subunit protein bS6 of Photorhabdus laumondii subsp. laumondii (strain DSM 15139 / CIP 105565 / TT01) (Photorhabdus luminescens subsp. laumondii).